A 384-amino-acid polypeptide reads, in one-letter code: Probable intron-encoded endonuclease Cox1-I1b (384 aa).

The protein belongs to the LAGLIDADG endonuclease family.

It localises to the mitochondrion. Probable mitochondrial DNA endonuclease involved in intron homing. The sequence is that of Probable intron-encoded endonuclease Cox1-I1b (cox1-I1b) from Schizosaccharomyces pombe (strain 972 / ATCC 24843) (Fission yeast).